The following is a 355-amino-acid chain: Anthranilate phosphoribosyltransferase (355 aa).

5-phospho-alpha-D-ribose 1-diphosphate is bound by residues G102, 105 to 106 (GD), S110, 112 to 115 (NIST), 130 to 138 (KHGNRSVSS), and S142. Residue G102 coordinates anthranilate. S114 contacts Mg(2+). N133 contacts anthranilate. Residue R188 coordinates anthranilate. Mg(2+)-binding residues include D246 and E247.

The protein belongs to the anthranilate phosphoribosyltransferase family. Homodimer. The cofactor is Mg(2+).

The enzyme catalyses N-(5-phospho-beta-D-ribosyl)anthranilate + diphosphate = 5-phospho-alpha-D-ribose 1-diphosphate + anthranilate. It participates in amino-acid biosynthesis; L-tryptophan biosynthesis; L-tryptophan from chorismate: step 2/5. Catalyzes the transfer of the phosphoribosyl group of 5-phosphorylribose-1-pyrophosphate (PRPP) to anthranilate to yield N-(5'-phosphoribosyl)-anthranilate (PRA). This Pectobacterium carotovorum subsp. carotovorum (strain PC1) protein is Anthranilate phosphoribosyltransferase.